Consider the following 229-residue polypeptide: Large ribosomal subunit protein uL1 (229 aa).

The protein belongs to the universal ribosomal protein uL1 family. Part of the 50S ribosomal subunit.

In terms of biological role, binds directly to 23S rRNA. The L1 stalk is quite mobile in the ribosome, and is involved in E site tRNA release. Its function is as follows. Protein L1 is also a translational repressor protein, it controls the translation of the L11 operon by binding to its mRNA. The polypeptide is Large ribosomal subunit protein uL1 (Clostridium perfringens (strain ATCC 13124 / DSM 756 / JCM 1290 / NCIMB 6125 / NCTC 8237 / Type A)).